A 258-amino-acid chain; its full sequence is Phosphate import ATP-binding protein PstB 1 (258 aa).

An ABC transporter domain is found at 5-247 (LDLTDVNIYY…EKIFSNPNQK (243 aa)). Residue 37-44 (GPSGCGKT) coordinates ATP.

The protein belongs to the ABC transporter superfamily. Phosphate importer (TC 3.A.1.7) family. The complex is composed of two ATP-binding proteins (PstB), two transmembrane proteins (PstC and PstA) and a solute-binding protein (PstS).

It localises to the cell membrane. The enzyme catalyses phosphate(out) + ATP + H2O = ADP + 2 phosphate(in) + H(+). Its function is as follows. Part of the ABC transporter complex PstSACB involved in phosphate import. Responsible for energy coupling to the transport system. This chain is Phosphate import ATP-binding protein PstB 1, found in Mycobacterium tuberculosis (strain CDC 1551 / Oshkosh).